The chain runs to 319 residues: Structure-specific endonuclease subunit SLX1 (319 aa).

Positions 20 to 103 (TFYCCYLLQS…QHGYKTHYIP (84 aa)) constitute a GIY-YIG domain. Residues 233–297 (CNLCGQCYDY…LPNFCMCPGC (65 aa)) form an SLX1-type zinc finger.

Belongs to the SLX1 family. Forms a heterodimer with SLX4. A divalent metal cation is required as a cofactor.

Its subcellular location is the nucleus. Catalytic subunit of the SLX1-SLX4 structure-specific endonuclease that resolves DNA secondary structures generated during DNA repair and recombination. Has endonuclease activity towards branched DNA substrates, introducing single-strand cuts in duplex DNA close to junctions with ss-DNA. The polypeptide is Structure-specific endonuclease subunit SLX1 (Vanderwaltozyma polyspora (strain ATCC 22028 / DSM 70294 / BCRC 21397 / CBS 2163 / NBRC 10782 / NRRL Y-8283 / UCD 57-17) (Kluyveromyces polysporus)).